The sequence spans 752 residues: Catalase-peroxidase (752 aa).

Residues 1–20 are disordered; that stretch reads MENELVSKVKAPVPGNQTNT. Positions 111–234 form a cross-link, tryptophyl-tyrosyl-methioninium (Trp-Tyr) (with M-260); the sequence is WHSAGTYRIG…LGAVQMGLIY (124 aa). The Proton acceptor role is filled by histidine 112. The segment at residues 234–260 is a cross-link (tryptophyl-tyrosyl-methioninium (Tyr-Met) (with W-111)); sequence YVNPEGPNGKPDPAAAAVDIRETFARM. Histidine 275 contacts heme b.

The protein belongs to the peroxidase family. Peroxidase/catalase subfamily. Homodimer or homotetramer. The cofactor is heme b. Post-translationally, formation of the three residue Trp-Tyr-Met cross-link is important for the catalase, but not the peroxidase activity of the enzyme.

It carries out the reaction H2O2 + AH2 = A + 2 H2O. It catalyses the reaction 2 H2O2 = O2 + 2 H2O. Bifunctional enzyme with both catalase and broad-spectrum peroxidase activity. The sequence is that of Catalase-peroxidase from Koribacter versatilis (strain Ellin345).